The primary structure comprises 482 residues: Aspartyl/glutamyl-tRNA(Asn/Gln) amidotransferase subunit B (482 aa).

Belongs to the GatB/GatE family. GatB subfamily. In terms of assembly, heterotrimer of A, B and C subunits.

The enzyme catalyses L-glutamyl-tRNA(Gln) + L-glutamine + ATP + H2O = L-glutaminyl-tRNA(Gln) + L-glutamate + ADP + phosphate + H(+). The catalysed reaction is L-aspartyl-tRNA(Asn) + L-glutamine + ATP + H2O = L-asparaginyl-tRNA(Asn) + L-glutamate + ADP + phosphate + 2 H(+). In terms of biological role, allows the formation of correctly charged Asn-tRNA(Asn) or Gln-tRNA(Gln) through the transamidation of misacylated Asp-tRNA(Asn) or Glu-tRNA(Gln) in organisms which lack either or both of asparaginyl-tRNA or glutaminyl-tRNA synthetases. The reaction takes place in the presence of glutamine and ATP through an activated phospho-Asp-tRNA(Asn) or phospho-Glu-tRNA(Gln). The sequence is that of Aspartyl/glutamyl-tRNA(Asn/Gln) amidotransferase subunit B from Thermotoga neapolitana (strain ATCC 49049 / DSM 4359 / NBRC 107923 / NS-E).